The chain runs to 1273 residues: Ras-specific guanine nucleotide-releasing factor 1 (1273 aa).

Residues 22–129 (DGTRKGYLSK…WVAAIAHASY (108 aa)) form the PH 1 domain. The region spanning 204–229 (KKIKKVQSFLRGWLCRRKWKTIIQDY) is the IQ domain. In terms of domain architecture, DH spans 240 to 426 (KRNQVVFSML…EELSRIMHDE (187 aa)). The region spanning 467–584 (PMSEKGKITR…WTSDISQCVD (118 aa)) is the PH 2 domain. Phosphoserine; by PLK2 is present on residues Ser577 and Ser626. An N-terminal Ras-GEF domain is found at 644 to 761 (KVLQIRYASV…SRRRKLSLNI (118 aa)). The interval 724–754 (YGEPPKSPRATRKFSSPPPLSITKTSSPSRR) is disordered. At Ser758 the chain carries Phosphoserine. Phosphoserine; by PLK2 occurs at positions 779 and 800. The interval 809-874 (TNKIPDEGDT…PKSVKNKNSS (66 aa)) is disordered. Residues 842–854 (SDIDQNQSDDGDT) are compositionally biased toward acidic residues. Over residues 855 to 867 (ETSPTKSPTTPKS) the composition is skewed to low complexity. The Ras-GEF domain occupies 1038-1270 (SALEIAEQLT…YESSLRIEPK (233 aa)).

Homooligomer and heterooligomer with RASGRF2. Interacts with USP8, thereby regulating its stability. In terms of processing, phosphorylated by PLK2, leading to ubiquitination and degradation by the proteasome. Ubiquitinated and degraded following phosphorylation by PLK2. Post-translationally, phosphorylated by SRC and LCK. Phosphorylation by LCK increases its capacity to stimulate the GDP/GTP exchange on Ras, whereas its phosphorylation by SRC seems not to have an effect on stimulation activity.

Promotes the exchange of Ras-bound GDP by GTP. This Homo sapiens (Human) protein is Ras-specific guanine nucleotide-releasing factor 1 (RASGRF1).